A 319-amino-acid chain; its full sequence is Ninja-family protein AFP4 (319 aa).

Over residues 39 to 54 the composition is skewed to basic and acidic residues; that stretch reads DSEHGENQQEAKKRED. Disordered regions lie at residues 39–63, 99–120, and 205–228; these read DSEH…EKDV, FVFD…IVGR, and VTGP…NVEN.

It belongs to the Ninja family. Interacts with ABI5/DPBF1, AREB3/DPBF3, EEL/DPBF4, ABF1 and ABF3/DPBF5. Predominantly expressed in roots and seedlings.

Its subcellular location is the nucleus. Functionally, acts as a negative regulator of abscisic acid (ABA) and salinity responses. This is Ninja-family protein AFP4 (AFP4) from Arabidopsis thaliana (Mouse-ear cress).